The sequence spans 452 residues: MATSIKSITLALLIFSVLLISLSLGSVTATETTRNEAEARRMYERWLVENRKNYNGLGEKERRFEIFKDNLKFVEEHSSIPNRTYEVGLTRFADLTNDEFRAIYLRSKMERTRVPVKGEKYLYKVGDSLPDAIDWRAKGAVNPVKDQGSCGSCWAFSAIGAVEGINQIKTGELISLSEQELVDCDTSYNDGCGGGLMDYAFKFIIENGGIDTEEDYPYIATDVNVCNSDKKNTRVVTIDGYEDVPQNDEKSLKKALANQPISVAIEAGGRAFQLYTSGVFTGTCGTSLDHGVVAVGYGSEGGQDYWIVRNSWGSNWGESGYFKLERNIKESSGKCGVAMMASYPTKSSGSNPPKPPAPSPVVCDKSNTCPAKSTCCCLYEYNGKCYSWGCCPYESATCCDDGSSCCPQSYPVCDLKANTCRMKGNSPLSIKALTRGPAIATTKSTNMLVGSA.

The first 29 residues, 1–29 (MATSIKSITLALLIFSVLLISLSLGSVTA), serve as a signal peptide directing secretion. Residues 30–128 (TETTRNEAEA…EKYLYKVGDS (99 aa)) constitute a propeptide, activation peptide. Asn-82 is a glycosylation site (N-linked (GlcNAc...) asparagine). 5 cysteine pairs are disulfide-bonded: Cys-150–Cys-192, Cys-184–Cys-226, Cys-284–Cys-335, Cys-363–Cys-375, and Cys-369–Cys-390. Residue Cys-153 is part of the active site. Catalysis depends on residues His-290 and Asn-310. A propeptide spans 346–452 (KSSGSNPPKP…KSTNMLVGSA (107 aa)) (removed in mature form).

Belongs to the peptidase C1 family. As to quaternary structure, interacts with WSCP.

Its function is as follows. Probable thiol protease. The polypeptide is Probable cysteine protease RD21C (Arabidopsis thaliana (Mouse-ear cress)).